Here is a 205-residue protein sequence, read N- to C-terminus: CASP-like protein 3A1 (205 aa).

Residues 1-39 lie on the Cytoplasmic side of the membrane; that stretch reads MGIGMDSSTMSGPLVAHSGILDGDYEKRPAVCKMQMRFD. A helical transmembrane segment spans residues 40–60; that stretch reads LANVGLRVLSLACSLVALVSM. The Extracellular segment spans residues 61-89; sequence ASNQESGVVTVFGFKLPVYSKWSYSDSFE. A helical transmembrane segment spans residues 90 to 110; that stretch reads FLVGASAAAAAHSLLQLLLCG. The Cytoplasmic segment spans residues 111-125; sequence MKMVKRASTIPSRNH. A helical transmembrane segment spans residues 126–146; it reads AWLLFAGDQVFAYGMLAAASA. Over 147-176 the chain is Extracellular; that stretch reads AAGVTNLNRTGFRHSDLPNFCKPLHRFCDK. An N-linked (GlcNAc...) asparagine glycan is attached at Asn154. A helical transmembrane segment spans residues 177–197; the sequence is AAISIVFAFISSLILGGSAVL. The Cytoplasmic segment spans residues 198–205; the sequence is DVFWLSKN.

It belongs to the Casparian strip membrane proteins (CASP) family. As to quaternary structure, homodimer and heterodimers.

It localises to the cell membrane. In Picea sitchensis (Sitka spruce), this protein is CASP-like protein 3A1.